The primary structure comprises 284 residues: Protoheme IX farnesyltransferase (284 aa).

A run of 9 helical transmembrane segments spans residues 2–19 (SLVV…PVTV), 23–45 (IALT…NMWS), 69–89 (GEAL…LGLA), 92–112 (LFAA…YSMW), 121–141 (IVIG…VATG), 148–168 (LFMF…LALF), 194–214 (VLVY…TGTG), 217–237 (LYLA…VRTW), and 263–283 (LFLH…GLGG).

This sequence belongs to the UbiA prenyltransferase family. Protoheme IX farnesyltransferase subfamily. Interacts with CtaA.

It is found in the cell inner membrane. The catalysed reaction is heme b + (2E,6E)-farnesyl diphosphate + H2O = Fe(II)-heme o + diphosphate. It functions in the pathway porphyrin-containing compound metabolism; heme O biosynthesis; heme O from protoheme: step 1/1. Functionally, converts heme B (protoheme IX) to heme O by substitution of the vinyl group on carbon 2 of heme B porphyrin ring with a hydroxyethyl farnesyl side group. The sequence is that of Protoheme IX farnesyltransferase from Cereibacter sphaeroides (Rhodobacter sphaeroides).